We begin with the raw amino-acid sequence, 160 residues long: MNRVLYPGTFDPITKGHGDLVERAARLFDHVIIAVAASPKKNPLFPLEQRVELAREVTKHLPNVEVVGFSSLLAHFVKEQGANVFLRGLRAVSDFEYEFQLANMNRQLAPDVESLFLTPSEKYSFISSTLVREIAALGGDISKFVHPAVADALNARFQKN.

Position 9 (T9) interacts with substrate. Residues 9-10 (TF) and H17 contribute to the ATP site. 3 residues coordinate substrate: K41, L73, and R87. ATP-binding positions include 88–90 (GLR), E98, and 123–129 (YSFISST).

It belongs to the bacterial CoaD family. As to quaternary structure, homohexamer. Mg(2+) is required as a cofactor.

It localises to the cytoplasm. The catalysed reaction is (R)-4'-phosphopantetheine + ATP + H(+) = 3'-dephospho-CoA + diphosphate. Its pathway is cofactor biosynthesis; coenzyme A biosynthesis; CoA from (R)-pantothenate: step 4/5. In terms of biological role, reversibly transfers an adenylyl group from ATP to 4'-phosphopantetheine, yielding dephospho-CoA (dPCoA) and pyrophosphate. The chain is Phosphopantetheine adenylyltransferase from Ectopseudomonas mendocina (strain ymp) (Pseudomonas mendocina).